The sequence spans 715 residues: MVVATTIALYASPASTVCSTAHQINAHISCDLDLNSRSSSASSSTSSPTIGGLSLLFSGASVKSSSSSSSSHPSVGEELASIRHDRSEDRTLSGSFCYSPSKFIGSSYLKRDHQSPVSVLHGPISSGNSPPMRISRDRNLDGGSALRVGSSRLFNGFVRKAIGSCVDYDTDSVLVDEQLPFTMDDGFEGERRQPYARDLLRRAQLKHKIFEDESVIKAFYEAEKAHRGQMRATGDPYLQHCVETAMLLADIGANSTVVVAGILHDTLDDSFMSYDYILRTFGSGVADLVEGVSKLSQLSKLARENNTACKTVEADRLHTMFLAMADARAVLIKLADRLHNMMTLYALPPVKRQRFAKETLEIFAPLANRLGISSWKVKLENLCFKHLHPDQHHEMSDMLEDSFDEAMITSAIEKLEQALKKEGISYHVVSGRHKSLYSIYCKMLKKKLTMDEIHDIHGLRLIVDNEKDCYKALGVVHKLWSEVPGKLKDYISHPKFNGYQSLHTVVMGDGTIPLEVQIRTKEMHLQAEFGFAAHWRYKEGDCKHSSFVLQMVEWARWVVTWHFETMSKDGSSICSSEPLCSFPSHAEDCPFSYKPSGNQEGPVYVIVIENEKMTVQEFPENSTVSDLLRRAGPGSSRWSMYSIPAKEELRPRLNQTPVSDLKCKLKMGDVVELTPAIPDKSLTEYREEIQRMYDRGLAFSRPHRAATGTMVGWGS.

The transit peptide at 1 to 64 directs the protein to the chloroplast; it reads MVVATTIALY…LLFSGASVKS (64 aa). Over residues 65–74 the composition is skewed to low complexity; the sequence is SSSSSSSHPS. Residues 65 to 84 form a disordered region; the sequence is SSSSSSSHPSVGEELASIRH. The region spanning 237-341 is the HD domain; the sequence is YLQHCVETAM…IKLADRLHNM (105 aa).

The protein belongs to the RelA/SpoT family. Expressed in roots, hypocotyls, shoots, cotyledons, rosette and cauline leaves, stems, petals, sepals, stamens, pistils and siliques.

The protein resides in the plastid. The protein localises to the chloroplast. It carries out the reaction GTP + ATP = guanosine 3'-diphosphate 5'-triphosphate + AMP. Possesses ppGpp (guanosine 3'-diphosphate 5'-diphosphate) synthetase activity in vitro and is able to functionally complement E.coli relA mutants. May be involved in a rapid plant ppGpp-mediated response to pathogens and other stresses. The chain is Probable GTP diphosphokinase RSH3, chloroplastic (RSH3) from Arabidopsis thaliana (Mouse-ear cress).